A 315-amino-acid chain; its full sequence is MASALTTQGTAITMKQLLEAGVHFGHQTKRWNPKMKPYIFGARNGIYIIDLQKTVGLARGALRFVSDAVAKGGMVLFVGTKKQAQDAIREEASRSGQYHVTNRWLGGTLTNFKTVKQGIDRLKTIEKMAADGTYERLPKKEVAQLEREREKLEKNLGGIKEMSRLPAAIFVIDTKKEHIAVHEANRLGIPVVAVVDTNCDPEGIEYVIPGNDDAIRSIRLFTGKIAEACIEGRARYSTWAAQHGEERRPGEEDRDAASERGQKDRRDRRDRRGGGRDRERREPREDRAAASANVEVVRKGEVTPAQPAPGSDANR.

The segment at alanine 241 to arginine 315 is disordered. The span at histidine 243–alanine 288 shows a compositional bias: basic and acidic residues.

Belongs to the universal ribosomal protein uS2 family.

This is Small ribosomal subunit protein uS2 from Anaeromyxobacter sp. (strain Fw109-5).